Here is a 130-residue protein sequence, read N- to C-terminus: Small ribosomal subunit protein uS8A (130 aa).

It belongs to the universal ribosomal protein uS8 family. In terms of assembly, component of the small ribosomal subunit (SSU). Mature ribosomes consist of a small (40S) and a large (60S) subunit. The 40S subunit contains about 32 different proteins and 1 molecule of RNA (18S). The 60S subunit contains 45 different proteins and 3 molecules of RNA (25S, 5.8S and 5S).

The protein localises to the cytoplasm. Functionally, component of the ribosome, a large ribonucleoprotein complex responsible for the synthesis of proteins in the cell. The small ribosomal subunit (SSU) binds messenger RNAs (mRNAs) and translates the encoded message by selecting cognate aminoacyl-transfer RNA (tRNA) molecules. The large subunit (LSU) contains the ribosomal catalytic site termed the peptidyl transferase center (PTC), which catalyzes the formation of peptide bonds, thereby polymerizing the amino acids delivered by tRNAs into a polypeptide chain. The nascent polypeptides leave the ribosome through a tunnel in the LSU and interact with protein factors that function in enzymatic processing, targeting, and the membrane insertion of nascent chains at the exit of the ribosomal tunnel. This Candida albicans (strain SC5314 / ATCC MYA-2876) (Yeast) protein is Small ribosomal subunit protein uS8A (RPS22A).